The sequence spans 426 residues: Histidine--tRNA ligase (426 aa).

The protein belongs to the class-II aminoacyl-tRNA synthetase family. As to quaternary structure, homodimer.

Its subcellular location is the cytoplasm. It catalyses the reaction tRNA(His) + L-histidine + ATP = L-histidyl-tRNA(His) + AMP + diphosphate + H(+). This chain is Histidine--tRNA ligase, found in Streptococcus pyogenes serotype M18 (strain MGAS8232).